We begin with the raw amino-acid sequence, 96 residues long: Small ribosomal subunit protein bS6 (96 aa).

It belongs to the bacterial ribosomal protein bS6 family.

Binds together with bS18 to 16S ribosomal RNA. The chain is Small ribosomal subunit protein bS6 from Streptococcus mutans serotype c (strain ATCC 700610 / UA159).